Here is a 183-residue protein sequence, read N- to C-terminus: Nodulation protein L (183 aa).

Belongs to the transferase hexapeptide repeat family.

Its function is as follows. Acetyltransferase implicated in the O-acetylation of Nod factors. The sequence is that of Nodulation protein L (nodL) from Rhizobium meliloti (strain 1021) (Ensifer meliloti).